A 213-amino-acid chain; its full sequence is Thymidine kinase (213 aa).

Residues 20–27 and 93–96 each bind ATP; these read GPMFSGKT and DEAQ. Catalysis depends on Glu-94, which acts as the Proton acceptor. Positions 150, 153, 185, and 188 each coordinate Zn(2+).

The protein belongs to the thymidine kinase family. Homotetramer.

It is found in the cytoplasm. It catalyses the reaction thymidine + ATP = dTMP + ADP + H(+). This is Thymidine kinase from Mycoplasma genitalium (strain ATCC 33530 / DSM 19775 / NCTC 10195 / G37) (Mycoplasmoides genitalium).